The sequence spans 340 residues: Alcohol dehydrogenase (340 aa).

Residues Cys40 and His63 each coordinate Zn(2+).

This sequence belongs to the zinc-containing alcohol dehydrogenase family. Zn(2+) serves as cofactor.

The enzyme catalyses a primary alcohol + NAD(+) = an aldehyde + NADH + H(+). It carries out the reaction a secondary alcohol + NAD(+) = a ketone + NADH + H(+). This chain is Alcohol dehydrogenase (adhA), found in Rhizobium meliloti (strain 1021) (Ensifer meliloti).